The chain runs to 131 residues: UPF0102 protein YraN (131 aa).

Positions 1 to 19 (MATVPTRSGSPRQLTTKQT) are enriched in polar residues. A disordered region spans residues 1-21 (MATVPTRSGSPRQLTTKQTGD).

Belongs to the UPF0102 family.

This is UPF0102 protein YraN from Escherichia coli O127:H6 (strain E2348/69 / EPEC).